We begin with the raw amino-acid sequence, 324 residues long: Transcription factor MYB74 (324 aa).

2 HTH myb-type domains span residues 10 to 62 (KNGL…TNYL) and 63 to 117 (RPDI…RKRL). 2 DNA-binding regions (H-T-H motif) span residues 38 to 62 (WRTL…TNYL) and 90 to 113 (WSAI…NTHI).

In terms of tissue distribution, highly expressed in flowers and at lower levels in rosette leaves and cauline leaves. Expressed at low levels in roots, stems and siliques.

The protein localises to the nucleus. In terms of biological role, probable transcription factor that may function in salt stress response. In Arabidopsis thaliana (Mouse-ear cress), this protein is Transcription factor MYB74.